Consider the following 292-residue polypeptide: Ribosomal RNA small subunit methyltransferase I (292 aa).

Belongs to the methyltransferase superfamily. RsmI family.

It localises to the cytoplasm. It carries out the reaction cytidine(1402) in 16S rRNA + S-adenosyl-L-methionine = 2'-O-methylcytidine(1402) in 16S rRNA + S-adenosyl-L-homocysteine + H(+). Functionally, catalyzes the 2'-O-methylation of the ribose of cytidine 1402 (C1402) in 16S rRNA. The protein is Ribosomal RNA small subunit methyltransferase I of Bacillus subtilis (strain 168).